The following is a 324-amino-acid chain: Zinc transporter ZIP1 (324 aa).

The Extracellular segment spans residues 1–30; sequence MGPWGEPELLVWRPEAVASEPSVPVGLEVK. A helical transmembrane segment spans residues 31 to 51; that stretch reads LGALVLLLLLTLICSLVPVCV. The Cytoplasmic portion of the chain corresponds to 52-68; it reads LRRSGANHEASASGQKA. The chain crosses the membrane as a helical span at residues 69-89; that stretch reads LSLVSCFAGGVFLATCLLDLL. Topologically, residues 90–104 are extracellular; that stretch reads PDYLAAIDEALEALH. Residues 105 to 125 traverse the membrane as a helical segment; the sequence is VTLQFPLQEFILAMGFFLVLV. Residues 126 to 179 lie on the Cytoplasmic side of the membrane; the sequence is MEQITLAYKEQTSPPHPEETRALLGTVNGGPQHWHDGPGIPQAGGTPAAPSALR. A helical transmembrane segment spans residues 180-200; it reads ACVLVFSLALHSVFEGLAVGL. At 201-206 the chain is on the extracellular side; sequence QRDRAR. Residues 207 to 227 form a helical membrane-spanning segment; sequence AMELCLALLLHKGILAVSLSL. At 228–237 the chain is on the cytoplasmic side; that stretch reads RLLQSHLRVQ. Residues 238-258 traverse the membrane as a helical segment; it reads VVAGCGILFSCMTPLGIGLGA. Residues 259 to 272 are Extracellular-facing; sequence ALAESAGPLHQLAQ. A helical membrane pass occupies residues 273-293; sequence SVLEGMAAGTFLYITFLEILP. Over 294 to 303 the chain is Cytoplasmic; sequence QELATSEQRI. The helical transmembrane segment at 304 to 324 threads the bilayer; sequence LKVILLLAGFALLTGLLFVQI.

It belongs to the ZIP transporter (TC 2.A.5) family. Ubiquitous, except in the pancreas. Highest levels seen in kidney, salivary gland and placenta.

Its subcellular location is the cell membrane. The protein resides in the endoplasmic reticulum membrane. The catalysed reaction is Zn(2+)(in) = Zn(2+)(out). Transporter for the divalent cation Zn(2+). Mediates the influx of Zn(2+) into cells from extracellular space. The sequence is that of Zinc transporter ZIP1 (Slc39a1) from Mus musculus (Mouse).